A 210-amino-acid polypeptide reads, in one-letter code: Phosphate propanoyltransferase (210 aa).

26-28 (ISN) contributes to the CoA binding site. The Zn(2+) site is built by H30 and H32. Residues K71 and R78 each coordinate CoA. Residue R84 coordinates phosphate. Positions 90, 138, 140, and 186 each coordinate Zn(2+). A CoA-binding site is contributed by N193.

Belongs to the PduL family. Requires Zn(2+) as cofactor.

The protein localises to the bacterial microcompartment. It carries out the reaction propanoyl-CoA + phosphate = propanoyl phosphate + CoA. The protein operates within polyol metabolism; 1,2-propanediol degradation. Its function is as follows. Involved in 1,2-propanediol (1,2-PD) utilization within the bacterial microcompartment (BMC) dedicated to 1,2-PD degradation by catalyzing the conversion of propanoyl-CoA to propanoyl-phosphate. Required for optimal growth on 1,2-PD. CoA is regenerated within the BMC (for use by PduP) via this enzyme, although there must also be cofactor transport across the BMC. Directly targeted to the BMC. Functionally, expression of a cosmid containing the full 21-gene pdu operon in E.coli allows E.coli to grow on 1,2-propanediol (1,2-PD) with the appearance of bacterial microcompartments (BMC) in its cytoplasm. The 1,2-PD-specific bacterial microcompartment (BMC) concentrates low levels of 1,2-PD catabolic enzymes, concentrates volatile reaction intermediates thus enhancing pathway flux and keeps the level of toxic, mutagenic propionaldehyde low. This Citrobacter freundii protein is Phosphate propanoyltransferase.